Consider the following 131-residue polypeptide: MSMSDPIADMLTRIRNAQMVEKAVVLVPSSKVKVAIAQVLKDEGYIDGFSVKANDGKPQLEIALKYYAGRPVIERIERVSRPGLRVYKGHGAIPQVMNGLGVAIVTTPQGVMTDRKARATGTGGEVLCYVA.

It belongs to the universal ribosomal protein uS8 family. As to quaternary structure, part of the 30S ribosomal subunit. Contacts proteins S5 and S12.

One of the primary rRNA binding proteins, it binds directly to 16S rRNA central domain where it helps coordinate assembly of the platform of the 30S subunit. This Polaromonas naphthalenivorans (strain CJ2) protein is Small ribosomal subunit protein uS8.